The sequence spans 175 residues: Protein LHCP TRANSLOCATION DEFECT (175 aa).

The transit peptide at 1–68 directs the protein to the chloroplast; that stretch reads MASSSISFSC…WFKFGKNGVD (68 aa). The ANK repeat unit spans residues 117–149; sequence PVDILLMLAATEGDRPKIEELLKAGADYSVKDA.

As to quaternary structure, interacts with CAO/cpSRP43, but is not a component of the transit complex. Interacts with LHCP (via T14 domain), TIC40 and TIC110. As to expression, highly expressed in leaves and seedlings. Detected in roots, but not in germinating seeds.

The protein resides in the plastid. It localises to the chloroplast thylakoid membrane. The protein localises to the chloroplast envelope. It is found in the chloroplast stroma. Involved in the import of light-harvesting complex proteins (LHCP) and subsequent routing of these proteins to the chloroplast signal recognition particle (SRP) pathway. In Arabidopsis thaliana (Mouse-ear cress), this protein is Protein LHCP TRANSLOCATION DEFECT (LTD).